We begin with the raw amino-acid sequence, 680 residues long: DNA-directed RNA polymerase subunit beta' (680 aa).

Positions 69, 71, 87, and 90 each coordinate Zn(2+). Residues Asp489, Asp491, and Asp493 each contribute to the Mg(2+) site.

Belongs to the RNA polymerase beta' chain family. RpoC1 subfamily. In plastids the minimal PEP RNA polymerase catalytic core is composed of four subunits: alpha, beta, beta', and beta''. When a (nuclear-encoded) sigma factor is associated with the core the holoenzyme is formed, which can initiate transcription. The cofactor is Mg(2+). It depends on Zn(2+) as a cofactor.

It is found in the plastid. The protein localises to the chloroplast. It catalyses the reaction RNA(n) + a ribonucleoside 5'-triphosphate = RNA(n+1) + diphosphate. DNA-dependent RNA polymerase catalyzes the transcription of DNA into RNA using the four ribonucleoside triphosphates as substrates. The protein is DNA-directed RNA polymerase subunit beta' of Aethionema cordifolium (Lebanon stonecress).